Here is a 67-residue protein sequence, read N- to C-terminus: Probable Sec-independent protein translocase protein TatE (67 aa).

Residues 4–21 (ISITKLLVVAALVVLLFG) form a helical membrane-spanning segment.

This sequence belongs to the TatA/E family. TatE subfamily.

It is found in the cell inner membrane. Functionally, part of the twin-arginine translocation (Tat) system that transports large folded proteins containing a characteristic twin-arginine motif in their signal peptide across membranes. TatE shares overlapping functions with TatA. The protein is Probable Sec-independent protein translocase protein TatE of Enterobacter cloacae subsp. cloacae (strain ATCC 13047 / DSM 30054 / NBRC 13535 / NCTC 10005 / WDCM 00083 / NCDC 279-56).